The chain runs to 892 residues: DNA mismatch repair protein MutS (892 aa).

An ATP-binding site is contributed by 607 to 614 (GPNMSGKS).

This sequence belongs to the DNA mismatch repair MutS family.

Its function is as follows. This protein is involved in the repair of mismatches in DNA. It is possible that it carries out the mismatch recognition step. This protein has a weak ATPase activity. In Bacillus cereus (strain AH820), this protein is DNA mismatch repair protein MutS.